Consider the following 122-residue polypeptide: Dihydroneopterin aldolase (122 aa).

Residues Glu21, Tyr53, and 72-73 contribute to the substrate site; that span reads VE. The active-site Proton donor/acceptor is the Lys98.

This sequence belongs to the DHNA family. In terms of assembly, homooctamer.

The catalysed reaction is 7,8-dihydroneopterin = 6-hydroxymethyl-7,8-dihydropterin + glycolaldehyde. It catalyses the reaction 7,8-dihydroneopterin = 7,8-dihydromonapterin. It functions in the pathway cofactor biosynthesis; tetrahydrofolate biosynthesis; 2-amino-4-hydroxy-6-hydroxymethyl-7,8-dihydropteridine diphosphate from 7,8-dihydroneopterin triphosphate: step 3/4. In terms of biological role, catalyzes the conversion of 7,8-dihydroneopterin to 6-hydroxymethyl-7,8-dihydropterin. Can use L-threo-dihydroneopterin and D-erythro-dihydroneopterin as substrates for the formation of 6-hydroxymethyldihydropterin, but it can also catalyze the epimerization of carbon 2' of dihydroneopterin to dihydromonapterin at appreciable velocity. This Escherichia coli O6:H1 (strain CFT073 / ATCC 700928 / UPEC) protein is Dihydroneopterin aldolase (folB).